Consider the following 97-residue polypeptide: Large ribosomal subunit protein uL23 (97 aa).

It belongs to the universal ribosomal protein uL23 family. Part of the 50S ribosomal subunit. Contacts protein L29, and trigger factor when it is bound to the ribosome.

One of the early assembly proteins it binds 23S rRNA. One of the proteins that surrounds the polypeptide exit tunnel on the outside of the ribosome. Forms the main docking site for trigger factor binding to the ribosome. In Brachyspira hyodysenteriae (strain ATCC 49526 / WA1), this protein is Large ribosomal subunit protein uL23.